We begin with the raw amino-acid sequence, 89 residues long: Small ribosomal subunit protein uS15 (89 aa).

Belongs to the universal ribosomal protein uS15 family. Part of the 30S ribosomal subunit. Forms a bridge to the 50S subunit in the 70S ribosome, contacting the 23S rRNA.

In terms of biological role, one of the primary rRNA binding proteins, it binds directly to 16S rRNA where it helps nucleate assembly of the platform of the 30S subunit by binding and bridging several RNA helices of the 16S rRNA. Forms an intersubunit bridge (bridge B4) with the 23S rRNA of the 50S subunit in the ribosome. The polypeptide is Small ribosomal subunit protein uS15 (Streptococcus pyogenes serotype M1).